The sequence spans 324 residues: MTVLTAAEPPNRIEVDMDAPSLDTDSSCTSLSSSVQRYEYKHGRRYHGYHAGSYPFPNDKREQDRLDMIHHVYTRILNDRLFLAPLDPRGKAILDIGTGTGIWALHMGDAHPAARLIVGNDLSPIQPSWAPANVRFVVDDVEKDWVDRHPYDFIHCRYMAGSIKDWPRLIRQCYAHLRPGGWLELQESVNVMYSEDGTLPPDSFMARMMHGLIVACEKSGRTMDPAPSMEKWVQEAGFDPITKHRFKIPVGSWPKDPRLKECGSLMRVNFVEGVEAFTASLFTEVLGWTPEEVAVLNTGVREEAMRNDIHAIFDFVVIVAQKPY.

It belongs to the methyltransferase superfamily. LaeA methyltransferase family.

It functions in the pathway secondary metabolite biosynthesis. Methyltransferase; part of the gene cluster that mediates the biosynthesis of pyranterreones, a family of antioxidative compounds. The first step of pyranonigrins biosynthesis is performed by the hybrid PKS-NRPS synthetase pytA that condenses 4 malonyl-CoA units ato the acetyl starter unit by the modular PKS of pytA. The acyl chain is then connected to an L-serine through the amide bond by the modular NRPS of pytA. A tetramic acid is formed and released from the PKS-NRPS pytA to give pyranterreone 5 with the help of the thioesterase pytI. Pyranterreone 5 could be methylated by pytC to afford pyranterreone 6. Both pyranterreones 5 and 6 are subsequently oxidized by the FAD-linked oxidoreductase pytB and the cytochrome P450 monooxygenase pytD to form the fused gamma-pyrone core, resulting in pyranterreones 7 and 11, respectively. The hydroxy group at C-8 of pyranterreones 7 and 11 are dehydrated by the aspartyl protease pytH to form a delta-7 double bond to give pyranterreones 3 and 1, 2 accordingly. The exo-methylene of pyranterreone 3 could be reduced into a pendant methyl by reductase pytE to provide pyranterreone 4, also known as cordylactam. Pyranterreone 4 can be reconverted to pyranterreone 3 through pytB-catalyzed dehydrogenation or further oxidized to pyranterreones 9 and 10. This chain is Methyltransferase pytC, found in Aspergillus terreus (strain NIH 2624 / FGSC A1156).